The primary structure comprises 295 residues: UDP-N-acetylenolpyruvoylglucosamine reductase (295 aa).

Positions 24 to 188 constitute an FAD-binding PCMH-type domain; that stretch reads KVGGNAEIFF…LKAVFKVNKG (165 aa). Residue Arg168 is part of the active site. Residue Ser217 is the Proton donor of the active site. The active site involves Glu287.

This sequence belongs to the MurB family. FAD serves as cofactor.

It is found in the cytoplasm. It carries out the reaction UDP-N-acetyl-alpha-D-muramate + NADP(+) = UDP-N-acetyl-3-O-(1-carboxyvinyl)-alpha-D-glucosamine + NADPH + H(+). It participates in cell wall biogenesis; peptidoglycan biosynthesis. In terms of biological role, cell wall formation. The polypeptide is UDP-N-acetylenolpyruvoylglucosamine reductase (Rickettsia felis (strain ATCC VR-1525 / URRWXCal2) (Rickettsia azadi)).